A 652-amino-acid chain; its full sequence is MADVVLDLYAEDLDKDFAGQAQDEFGGDGVDLYDDIGGPTESAASGGGGGGTPSADGAAGPGSGEPGERNSGGPNGVYHQSSGSLTPTMNRRYQLYVGNLTWWTTDQDIANSLRDIGVSDLQEVKFFENRANGQSKGFSVISLGSESSLRAVLDQLPKKEMHGQAPVVTYPSKQALTQFESLQKTRPVPPPQQNGPPRGPAPPSMGGGPMPTGHPGGPQGGGPPGHPPRGMNSIMQPGQYRPQHMSQVPQVGGPNSGPPRMQPPMHPQGGLMGNQQPPPRYPSAQGQWPGQRPGGPRPGPPNGPPQRPMFQGGPMGMPVRGPAGPDWRRPPMHGGFPPQGPPRGLPPAPGPGGPHGAPAPHVNPAFFNQPGGPAQHPGMGGPPHGAPGPQPGMNMPPQQGMNMTPQHGPPPQFAQHGPRGPWPPPQGKPPGPFPDPQQMGPQLTEVEFEEVMSRNRTVSSSAIARAVSDAAAGEYSSAIETLVTAISLIKQSKVAHDERCKILISSLQDTLHGIEAKSYNRRERSRSRERSHRSRQRRERSTSRYRERSRERERDRDRERERDGGSYRERSRSRERERQAPDHYRDDSRSVRPRKSPEPVVAEAAEAPSSKRYYEDRERYRSSDRERRDRDRDRDRERERDRDRREEHRSRH.

The interval 20 to 85 is disordered; that stretch reads QAQDEFGGDG…GVYHQSSGSL (66 aa). The RRM domain maps to 93-173; it reads YQLYVGNLTW…QAPVVTYPSK (81 aa). Disordered regions lie at residues 184–440 and 518–652; these read KTRP…QQMG and SYNR…RSRH. The segment covering 187 to 203 has biased composition (pro residues); the sequence is PVPPPQQNGPPRGPAPP. Over residues 205-223 the composition is skewed to gly residues; the sequence is MGGGPMPTGHPGGPQGGGP. Pro residues-rich tracts occupy residues 256-266, 295-307, and 338-352; these read SGPPRMQPPMH, GPRP…PPQR, and PQGP…PGPG. Over residues 391–406 the composition is skewed to low complexity; the sequence is PGMNMPPQQGMNMTPQ. The span at 420–435 shows a compositional bias: pro residues; it reads GPWPPPQGKPPGPFPD. Basic and acidic residues predominate over residues 518–528; sequence SYNRRERSRSR. Residues 529-538 show a composition bias toward basic residues; that stretch reads ERSHRSRQRR. Residues 539–590 show a composition bias toward basic and acidic residues; it reads ERSTSRYRERSRERERDRDRERERDGGSYRERSRSRERERQAPDHYRDDSRS. S596 is modified (phosphoserine). Residues 598–610 are compositionally biased toward low complexity; sequence EPVVAEAAEAPSS. Over residues 612–652 the composition is skewed to basic and acidic residues; it reads RYYEDRERYRSSDRERRDRDRDRDRERERDRDRREEHRSRH.

It belongs to the RRM CPSF6/7 family.

The protein resides in the nucleus. May play a role in pre-mRNA 3'-processing. In Drosophila melanogaster (Fruit fly), this protein is Cleavage and polyadenylation specificity factor subunit 6.